Consider the following 420-residue polypeptide: Serine hydroxymethyltransferase (420 aa).

(6S)-5,6,7,8-tetrahydrofolate contacts are provided by residues leucine 123 and 127 to 129; that span reads GHL. Lysine 232 bears the N6-(pyridoxal phosphate)lysine mark. 357-359 is a (6S)-5,6,7,8-tetrahydrofolate binding site; the sequence is SPF.

It belongs to the SHMT family. Homodimer. Pyridoxal 5'-phosphate serves as cofactor.

The protein localises to the cytoplasm. It carries out the reaction (6R)-5,10-methylene-5,6,7,8-tetrahydrofolate + glycine + H2O = (6S)-5,6,7,8-tetrahydrofolate + L-serine. Its pathway is one-carbon metabolism; tetrahydrofolate interconversion. It participates in amino-acid biosynthesis; glycine biosynthesis; glycine from L-serine: step 1/1. Functionally, catalyzes the reversible interconversion of serine and glycine with tetrahydrofolate (THF) serving as the one-carbon carrier. This reaction serves as the major source of one-carbon groups required for the biosynthesis of purines, thymidylate, methionine, and other important biomolecules. Also exhibits THF-independent aldolase activity toward beta-hydroxyamino acids, producing glycine and aldehydes, via a retro-aldol mechanism. This is Serine hydroxymethyltransferase from Streptococcus pyogenes serotype M12 (strain MGAS2096).